A 349-amino-acid chain; its full sequence is UDP-galactose/UDP-glucose transporter 4 (349 aa).

The next 8 membrane-spanning stretches (helical) occupy residues Trp-23–Cys-43, Gly-56–Phe-76, Ile-115–Leu-135, Pro-140–Ala-160, Asn-167–Gly-187, Met-205–Gly-225, Ala-248–Ala-268, and Leu-293–Val-313. The disordered stretch occupies residues Pro-316–Val-349. The segment covering Glu-340 to Val-349 has biased composition (acidic residues).

It belongs to the nucleotide-sugar transporter family. UDP-galactose:UMP antiporter (TC 2.A.7.11) subfamily.

It is found in the membrane. Sugar transporter involved in the transport of nucleotide-sugars from cytoplasm into the Golgi and/or the endoplasmic reticulum. This Arabidopsis thaliana (Mouse-ear cress) protein is UDP-galactose/UDP-glucose transporter 4.